The sequence spans 143 residues: Nucleoside diphosphate kinase (143 aa).

Residues lysine 11, phenylalanine 59, arginine 87, threonine 93, arginine 104, and asparagine 114 each contribute to the ATP site. The Pros-phosphohistidine intermediate role is filled by histidine 117.

This sequence belongs to the NDK family. In terms of assembly, homotetramer. Mg(2+) serves as cofactor.

The protein localises to the cytoplasm. It catalyses the reaction a 2'-deoxyribonucleoside 5'-diphosphate + ATP = a 2'-deoxyribonucleoside 5'-triphosphate + ADP. The enzyme catalyses a ribonucleoside 5'-diphosphate + ATP = a ribonucleoside 5'-triphosphate + ADP. Major role in the synthesis of nucleoside triphosphates other than ATP. The ATP gamma phosphate is transferred to the NDP beta phosphate via a ping-pong mechanism, using a phosphorylated active-site intermediate. The sequence is that of Nucleoside diphosphate kinase from Citrobacter koseri (strain ATCC BAA-895 / CDC 4225-83 / SGSC4696).